A 609-amino-acid chain; its full sequence is Vanadium chloroperoxidase (609 aa).

Vanadate is bound by residues K353, R360, S402, G403, H404, R490, and H496. H404 acts as the Proton donor in catalysis. The disordered stretch occupies residues 569–609 (KPTPPEIQPMPQETPVQKPVGQQPVKGMWEEEQAPVVKEAP).

It belongs to the vanadium-dependent haloperoxidase family. Homotetramer. Requires vanadate as cofactor. Post-translationally, the N-terminus is blocked.

It is found in the secreted. It catalyses the reaction RH + Cl(-) + H2O2 = RCl + 2 H2O.. Its function is as follows. Catalyzes the oxidation of chloride in the presence of hydrogen peroxide to hypochlorous acid (ClOH), which in turn can react with a nucleophilic acceptor (RH), to form a chlorinated compound. The protein is Vanadium chloroperoxidase (CPO) of Curvularia inaequalis (Helminthosporium inaequale).